The chain runs to 648 residues: Activatory protein CHA4 (648 aa).

A compositionally biased stretch (pro residues) spans 1–10; it reads MMLEPSPPPL. The interval 1 to 37 is disordered; it reads MMLEPSPPPLTTTVTPSLPSSLKKSVTDNDQNNNNVP. The span at 11–22 shows a compositional bias: low complexity; it reads TTTVTPSLPSSL. Positions 44 to 70 form a DNA-binding region, zn(2)-C6 fungal-type; the sequence is CQNCRRRRRKCNMEKPCSNCIKFRTEC. Residues 140–177 form a disordered region; sequence AQSALPSSESNDENESDAFTKKMPSESPPPVGTNSIYP. 2 positions are modified to phosphoserine: Ser164 and Ser166.

It is found in the nucleus. Activates the CHA1 gene for L-serine dehydratase. Binds to the DNA sequence 5'-GVGGARAYRTRATTCCRC-3'. The chain is Activatory protein CHA4 (CHA4) from Saccharomyces cerevisiae (strain ATCC 204508 / S288c) (Baker's yeast).